The chain runs to 30 residues: Cyclotide psyleio E (30 aa).

A cross-link (cyclopeptide (Ser-Lys)) is located at residues 1–30 (SVTPIVCGETCFGGTCNTPGCSCSWPICTK). 3 cysteine pairs are disulfide-bonded: cysteine 7/cysteine 21, cysteine 11/cysteine 23, and cysteine 16/cysteine 28.

This is a cyclic peptide.

Its function is as follows. Probably participates in a plant defense mechanism. This Psychotria leiocarpa protein is Cyclotide psyleio E.